A 173-amino-acid chain; its full sequence is Co-chaperone protein HscB homolog (173 aa).

In terms of domain architecture, J spans 3–75 (NPFALFDLPI…ILRADCIIAL (73 aa)).

It belongs to the HscB family. Interacts with HscA and stimulates its ATPase activity.

In terms of biological role, co-chaperone involved in the maturation of iron-sulfur cluster-containing proteins. Seems to help targeting proteins to be folded toward HscA. The polypeptide is Co-chaperone protein HscB homolog (Mannheimia succiniciproducens (strain KCTC 0769BP / MBEL55E)).